The following is a 242-amino-acid chain: Methylthioribulose-1-phosphate dehydratase (242 aa).

A compositionally biased stretch (basic and acidic residues) spans 1-11 (MAQEIQKENND). Residues 1 to 20 (MAQEIQKENNDHLVQSSDPE) form a disordered region. Cys100 contributes to the substrate binding site. Zn(2+)-binding residues include His117 and His119. Catalysis depends on Glu146, which acts as the Proton donor/acceptor. Position 202 (His202) interacts with Zn(2+).

Belongs to the aldolase class II family. MtnB subfamily. Requires Zn(2+) as cofactor.

It is found in the cytoplasm. It catalyses the reaction 5-(methylsulfanyl)-D-ribulose 1-phosphate = 5-methylsulfanyl-2,3-dioxopentyl phosphate + H2O. It functions in the pathway amino-acid biosynthesis; L-methionine biosynthesis via salvage pathway; L-methionine from S-methyl-5-thio-alpha-D-ribose 1-phosphate: step 2/6. Functionally, catalyzes the dehydration of methylthioribulose-1-phosphate (MTRu-1-P) into 2,3-diketo-5-methylthiopentyl-1-phosphate (DK-MTP-1-P). The polypeptide is Methylthioribulose-1-phosphate dehydratase (Aspergillus niger (strain ATCC MYA-4892 / CBS 513.88 / FGSC A1513)).